Consider the following 260-residue polypeptide: Thiazole synthase (260 aa).

Lysine 96 acts as the Schiff-base intermediate with DXP in catalysis. Residues glycine 157, 183–184 (AG), and 205–206 (AS) contribute to the 1-deoxy-D-xylulose 5-phosphate site.

Belongs to the ThiG family. Homotetramer. Forms heterodimers with either ThiH or ThiS.

The protein resides in the cytoplasm. The enzyme catalyses [ThiS sulfur-carrier protein]-C-terminal-Gly-aminoethanethioate + 2-iminoacetate + 1-deoxy-D-xylulose 5-phosphate = [ThiS sulfur-carrier protein]-C-terminal Gly-Gly + 2-[(2R,5Z)-2-carboxy-4-methylthiazol-5(2H)-ylidene]ethyl phosphate + 2 H2O + H(+). It functions in the pathway cofactor biosynthesis; thiamine diphosphate biosynthesis. Functionally, catalyzes the rearrangement of 1-deoxy-D-xylulose 5-phosphate (DXP) to produce the thiazole phosphate moiety of thiamine. Sulfur is provided by the thiocarboxylate moiety of the carrier protein ThiS. In vitro, sulfur can be provided by H(2)S. This Corynebacterium glutamicum (strain ATCC 13032 / DSM 20300 / JCM 1318 / BCRC 11384 / CCUG 27702 / LMG 3730 / NBRC 12168 / NCIMB 10025 / NRRL B-2784 / 534) protein is Thiazole synthase.